We begin with the raw amino-acid sequence, 423 residues long: Adenylosuccinate synthetase (423 aa).

GTP contacts are provided by residues 12–18 and 40–42; these read GDEGKGK and GHT. The Proton acceptor role is filled by aspartate 13. Mg(2+) is bound by residues aspartate 13 and glycine 40. IMP is bound by residues 13 to 16, 38 to 41, threonine 129, arginine 143, glutamine 221, threonine 236, and arginine 300; these read DEGK and NAGH. Histidine 41 serves as the catalytic Proton donor. 296–302 is a substrate binding site; it reads AVTGRER. GTP-binding positions include arginine 302, 328–330, and 408–410; these read KSD and SVG.

The protein belongs to the adenylosuccinate synthetase family. As to quaternary structure, homodimer. It depends on Mg(2+) as a cofactor.

Its subcellular location is the cytoplasm. It catalyses the reaction IMP + L-aspartate + GTP = N(6)-(1,2-dicarboxyethyl)-AMP + GDP + phosphate + 2 H(+). The protein operates within purine metabolism; AMP biosynthesis via de novo pathway; AMP from IMP: step 1/2. Its function is as follows. Plays an important role in the de novo pathway of purine nucleotide biosynthesis. Catalyzes the first committed step in the biosynthesis of AMP from IMP. The protein is Adenylosuccinate synthetase of Phocaeicola vulgatus (strain ATCC 8482 / DSM 1447 / JCM 5826 / CCUG 4940 / NBRC 14291 / NCTC 11154) (Bacteroides vulgatus).